Consider the following 60-residue polypeptide: Small ribosomal subunit protein eS17 (60 aa).

This sequence belongs to the eukaryotic ribosomal protein eS17 family.

The polypeptide is Small ribosomal subunit protein eS17 (Methanosphaera stadtmanae (strain ATCC 43021 / DSM 3091 / JCM 11832 / MCB-3)).